Consider the following 328-residue polypeptide: L-asparaginase (328 aa).

One can recognise an Asparaginase/glutaminase domain in the interval 1–320 (MKLLVLGTGG…EEIRKIMERN (320 aa)). Thr11 functions as the Nucleophile; O-isoaspartyl threonine intermediate in the catalytic mechanism. Positions 11, 53, 54, 85, and 86 each coordinate L-aspartate. Residues Thr85, Asp86, Lys156, and Tyr274 each act as charge relay system in the active site.

The protein belongs to the asparaginase 1 family. Homodimer.

It carries out the reaction L-asparagine + H2O = L-aspartate + NH4(+). Its activity is regulated as follows. Chohan et al. found that divalent metal ions and EDTA do not have any significant effect on enzyme activity, indicating that activity is independent of metal ions. In another study, Hong et al. showed that activity is enhanced by Mg(2+), significantly inhibited by Co(2+) and Ni(2+), and moderately inhibited by Ca(2+), Cu(2+) and EDTA. Unfolding studies suggest that urea cannot induce complete unfolding and inactivation of the enzyme even at a concentration 8 M. However, in the presence of 4 M guanidine hydrochloride, the enzyme structure is unfolded with complete loss of enzyme activity. Its function is as follows. Catalyzes the hydrolysis of L-asparagine into L-aspartate and ammonia. Also displays D-asparaginase activity, which is about 50% of the L-asparaginase activity. Does not exhibit glutaminase activity. The polypeptide is L-asparaginase (Thermococcus kodakarensis (strain ATCC BAA-918 / JCM 12380 / KOD1) (Pyrococcus kodakaraensis (strain KOD1))).